Consider the following 308-residue polypeptide: Protein FdhE homolog (308 aa).

It belongs to the FdhE family.

It is found in the cytoplasm. Its function is as follows. Necessary for formate dehydrogenase activity. This chain is Protein FdhE homolog, found in Edwardsiella ictaluri (strain 93-146).